A 212-amino-acid polypeptide reads, in one-letter code: Protein-L-isoaspartate O-methyltransferase (212 aa).

Serine 60 is a catalytic residue.

This sequence belongs to the methyltransferase superfamily. L-isoaspartyl/D-aspartyl protein methyltransferase family.

Its subcellular location is the cytoplasm. The catalysed reaction is [protein]-L-isoaspartate + S-adenosyl-L-methionine = [protein]-L-isoaspartate alpha-methyl ester + S-adenosyl-L-homocysteine. In terms of biological role, catalyzes the methyl esterification of L-isoaspartyl residues in peptides and proteins that result from spontaneous decomposition of normal L-aspartyl and L-asparaginyl residues. It plays a role in the repair and/or degradation of damaged proteins. The sequence is that of Protein-L-isoaspartate O-methyltransferase from Pseudomonas entomophila (strain L48).